Here is a 459-residue protein sequence, read N- to C-terminus: Mitochondrial distribution and morphology protein 34 (459 aa).

An SMP-LTD domain is found at 1 to 190; sequence MSFRFNEAVF…LPSLIFNTSQ (190 aa). A compositionally biased stretch (basic and acidic residues) spans 338–347; it reads RSNSNDDNAK. The segment at 338-375 is disordered; the sequence is RSNSNDDNAKPRRRKIKCKKTRTPSNLQSQGEQAVDDS. A compositionally biased stretch (basic residues) spans 348-359; it reads PRRRKIKCKKTR.

Belongs to the MDM34 family. Component of the ER-mitochondria encounter structure (ERMES) or MDM complex, composed of MMM1, MDM10, MDM12 and MDM34. In terms of processing, ubiquitinated by a SCF (SKP1-CUL1-F-box protein) E3 ubiquitin-protein ligase complex containing the F-box protein MDM30. Ubiquitination is important for mitochondrial integrity.

The protein resides in the mitochondrion outer membrane. Its function is as follows. Component of the ERMES/MDM complex, which serves as a molecular tether to connect the endoplasmic reticulum (ER) and mitochondria. Components of this complex are involved in the control of mitochondrial shape and protein biogenesis, and function in nonvesicular lipid trafficking between the ER and mitochondria. MDM34 is required for the interaction of the ER-resident membrane protein MMM1 and the outer mitochondrial membrane-resident beta-barrel protein MDM10. In Saccharomyces cerevisiae (strain AWRI1631) (Baker's yeast), this protein is Mitochondrial distribution and morphology protein 34.